We begin with the raw amino-acid sequence, 909 residues long: Phosphoenolpyruvate carboxylase (909 aa).

Active-site residues include histidine 151 and lysine 578.

It belongs to the PEPCase type 1 family. Requires Mg(2+) as cofactor.

The enzyme catalyses oxaloacetate + phosphate = phosphoenolpyruvate + hydrogencarbonate. Forms oxaloacetate, a four-carbon dicarboxylic acid source for the tricarboxylic acid cycle. The protein is Phosphoenolpyruvate carboxylase of Caulobacter vibrioides (strain ATCC 19089 / CIP 103742 / CB 15) (Caulobacter crescentus).